Reading from the N-terminus, the 353-residue chain is Photosystem II D2 protein (353 aa).

The residue at position 2 (Thr2) is an N-acetylthreonine. A Phosphothreonine modification is found at Thr2. Residues 41-61 (CAYFALGGWFTGTTFVTSWYT) form a helical membrane-spanning segment. Position 118 (His118) interacts with chlorophyll a. Residues 125-141 (GFMLRQFELARSVQLRP) traverse the membrane as a helical segment. Pheophytin a-binding residues include Gln130 and Asn143. A helical transmembrane segment spans residues 153–166 (VFVSVFLIYPLGQS). His198 lines the chlorophyll a pocket. A helical membrane pass occupies residues 208 to 228 (AALLCAIHGATVENTLFEDGD). The a plastoquinone site is built by His215 and Phe262. His215 provides a ligand contact to Fe cation. His269 contributes to the Fe cation binding site. The chain crosses the membrane as a helical span at residues 279 to 295 (GLWMSALGVVGLALNLR).

It belongs to the reaction center PufL/M/PsbA/D family. As to quaternary structure, PSII is composed of 1 copy each of membrane proteins PsbA, PsbB, PsbC, PsbD, PsbE, PsbF, PsbH, PsbI, PsbJ, PsbK, PsbL, PsbM, PsbT, PsbX, PsbY, PsbZ, Psb30/Ycf12, at least 3 peripheral proteins of the oxygen-evolving complex and a large number of cofactors. It forms dimeric complexes. The D1/D2 heterodimer binds P680, chlorophylls that are the primary electron donor of PSII, and subsequent electron acceptors. It shares a non-heme iron and each subunit binds pheophytin, quinone, additional chlorophylls, carotenoids and lipids. There is also a Cl(-1) ion associated with D1 and D2, which is required for oxygen evolution. The PSII complex binds additional chlorophylls, carotenoids and specific lipids. serves as cofactor.

Its subcellular location is the plastid. The protein resides in the chloroplast thylakoid membrane. The catalysed reaction is 2 a plastoquinone + 4 hnu + 2 H2O = 2 a plastoquinol + O2. Functionally, photosystem II (PSII) is a light-driven water:plastoquinone oxidoreductase that uses light energy to abstract electrons from H(2)O, generating O(2) and a proton gradient subsequently used for ATP formation. It consists of a core antenna complex that captures photons, and an electron transfer chain that converts photonic excitation into a charge separation. The D1/D2 (PsbA/PsbD) reaction center heterodimer binds P680, the primary electron donor of PSII as well as several subsequent electron acceptors. D2 is needed for assembly of a stable PSII complex. The polypeptide is Photosystem II D2 protein (Pelargonium hortorum (Common geranium)).